We begin with the raw amino-acid sequence, 140 residues long: MAKLKLDIVTAERSVFSEEVDVVVAPGIEGEMAILPHHAPLMTALQAGELKAKIGTEEYSLVVSGGFLEVRPDRVVVLADSAERAEEIDIARAIEAKKRAEASMADKYVPGMLAAETEASLRRAMVRLKVAEKRRKHPQV.

Belongs to the ATPase epsilon chain family. In terms of assembly, F-type ATPases have 2 components, CF(1) - the catalytic core - and CF(0) - the membrane proton channel. CF(1) has five subunits: alpha(3), beta(3), gamma(1), delta(1), epsilon(1). CF(0) has three main subunits: a, b and c.

It localises to the cell membrane. Its function is as follows. Produces ATP from ADP in the presence of a proton gradient across the membrane. The protein is ATP synthase epsilon chain of Dehalococcoides mccartyi (strain ATCC BAA-2100 / JCM 16839 / KCTC 5957 / BAV1).